Reading from the N-terminus, the 498-residue chain is Protein MGF 505-5R (498 aa).

It belongs to the asfivirus MGF 505 family.

In terms of biological role, plays a role in virus cell tropism, and may be required for efficient virus replication in macrophages. This chain is Protein MGF 505-5R, found in African swine fever virus (strain Badajoz 1971 Vero-adapted) (Ba71V).